A 173-amino-acid polypeptide reads, in one-letter code: Urease accessory protein UreE (173 aa).

The interval 136–173 (PEGGAYAGSGQDHHDHSHGEHTQGEHTHDEAAEPHHHG) is disordered. Over residues 146 to 173 (QDHHDHSHGEHTQGEHTHDEAAEPHHHG) the composition is skewed to basic and acidic residues.

It belongs to the UreE family.

It is found in the cytoplasm. Involved in urease metallocenter assembly. Binds nickel. Probably functions as a nickel donor during metallocenter assembly. This chain is Urease accessory protein UreE, found in Beijerinckia indica subsp. indica (strain ATCC 9039 / DSM 1715 / NCIMB 8712).